The sequence spans 567 residues: Chitinase 3 (567 aa).

A signal peptide spans Met-1–Ala-16. In terms of domain architecture, GH18 spans Ser-23 to Ala-313. The Proton donor role is filled by Glu-157. Asn-159 carries N-linked (GlcNAc...) asparagine glycosylation. A disordered region spans residues Ala-313–Thr-471. 2 stretches are compositionally biased toward low complexity: residues Thr-319 to Ser-436 and Ser-444 to Thr-471.

Belongs to the glycosyl hydrolase 18 family. Chitinase class III subfamily.

The protein resides in the secreted. It catalyses the reaction Random endo-hydrolysis of N-acetyl-beta-D-glucosaminide (1-&gt;4)-beta-linkages in chitin and chitodextrins.. Chitinase involved in the remodeling of chitin in the fungal cell wall. Plays a role in cell separation. The sequence is that of Chitinase 3 (CHT3) from Candida albicans (strain SC5314 / ATCC MYA-2876) (Yeast).